A 500-amino-acid polypeptide reads, in one-letter code: Transcription termination/antitermination protein NusA (500 aa).

The region spanning 135–205 (GEIVTGVVKK…RGAQLFVTRS (71 aa)) is the S1 motif domain. Residues 307 to 373 (KHTMDIAVEA…FTKYLDIDEE (67 aa)) form the KH domain. Repeat copies occupy residues 369–419 (DIDE…KNAL) and 444–494 (GLDR…RNIC). The segment at 369-494 (DIDEEFATVL…ELIMAARNIC (126 aa)) is 2 X 51 AA approximate repeats.

It belongs to the NusA family. Monomer. Binds directly to the core enzyme of the DNA-dependent RNA polymerase and to nascent RNA.

It is found in the cytoplasm. Its function is as follows. Participates in both transcription termination and antitermination. In Salmonella typhimurium (strain LT2 / SGSC1412 / ATCC 700720), this protein is Transcription termination/antitermination protein NusA.